The following is a 621-amino-acid chain: Kininogen-1 (621 aa).

The N-terminal stretch at 1-18 (MKLITILFLCSRLLPSLT) is a signal peptide. Residues 27 to 131 (CNDQDVFKAV…IQTCLITPAE (105 aa)) form the Cystatin kininogen-type 1 domain. 9 cysteine pairs are disulfide-bonded: cysteine 27/cysteine 591, cysteine 82/cysteine 93, cysteine 106/cysteine 125, cysteine 141/cysteine 144, cysteine 205/cysteine 217, cysteine 228/cysteine 247, cysteine 263/cysteine 266, cysteine 327/cysteine 339, and cysteine 350/cysteine 369. N-linked (GlcNAc...) asparagine glycans are attached at residues asparagine 47 and asparagine 87. An O-linked (GalNAc...) threonine; partial glycan is attached at threonine 136. In terms of domain architecture, Cystatin kininogen-type 2 spans 150–253 (TKSPDLEPVL…SQKCDLYPVK (104 aa)). N-linked (GlcNAc...) asparagine glycans are attached at residues asparagine 168 and asparagine 169. The N-linked (GlcNAc...) asparagine; partial glycan is linked to asparagine 197. N-linked (GlcNAc...) asparagine glycosylation is present at asparagine 204. The Cystatin kininogen-type 3 domain occupies 272-375 (VDSPDLEEPL…TVNCQPLGQT (104 aa)). Position 331 is a phosphoserine (serine 331). The segment at 396–497 (EGSTTVSLPH…GKNNGKHYDW (102 aa)) is disordered. A glycan (O-linked (GalNAc...) serine) is linked at serine 398. Threonine 399 and threonine 400 each carry an O-linked (GalNAc...) threonine glycan. Residue serine 406 is glycosylated (O-linked (GalNAc...) serine). Over residues 444-492 (GHKHKHDQGHGHHGSHGLGHGHQKQHGLGHGHKHGHGHGKHKNKGKNNG) the composition is skewed to basic residues. Serine 512 carries O-linked (GalNAc...) serine glycosylation. Threonine 520, threonine 524, threonine 536, threonine 548, threonine 553, and threonine 570 each carry an O-linked (GalNAc...) threonine glycan. A glycan (O-linked (GalNAc...) serine) is linked at serine 581.

In terms of processing, bradykinin is released from kininogen by plasma kallikrein. Phosphorylated by FAM20C in the extracellular medium. Post-translationally, bradykinin is inactivated by ACE, which removes the dipeptide Arg-Phe from its C-terminus. Plasma.

Its subcellular location is the secreted. It localises to the extracellular space. In terms of biological role, kininogens are inhibitors of thiol proteases. HMW-kininogen plays an important role in blood coagulation by helping to position optimally prekallikrein and factor XI next to factor XII; HMW-kininogen inhibits the thrombin- and plasmin-induced aggregation of thrombocytes. LMW-kininogen inhibits the aggregation of thrombocytes. LMW-kininogen is in contrast to HMW-kininogen not involved in blood clotting. The active peptide bradykinin is a potent vasodilatator that is released from HMW-kininogen shows a variety of physiological effects: (A) influence in smooth muscle contraction, (B) induction of hypotension, (C) natriuresis and diuresis, (D) decrease in blood glucose level, (E) it is a mediator of inflammation and causes (E1) increase in vascular permeability, (E2) stimulation of nociceptors (4E3) release of other mediators of inflammation (e.g. prostaglandins), (F) it has a cardioprotective effect (directly via bradykinin action, indirectly via endothelium-derived relaxing factor action). This chain is Kininogen-1 (KNG1), found in Bos taurus (Bovine).